A 481-amino-acid polypeptide reads, in one-letter code: Trichosetin biosynthesis cluster MFS transporter (481 aa).

Positions 1 to 13 (MSTTPQMSQSGFQ) are enriched in polar residues. The segment at 1-63 (MSTTPQMSQS…DGPDDPQHPL (63 aa)) is disordered. Residues 20-31 (GAREDVGTEAQE) show a composition bias toward basic and acidic residues. Residue asparagine 64 is glycosylated (N-linked (GlcNAc...) asparagine). Residues 72-92 (LHVGIVSLSTLAANLAATMFA) form a helical membrane-spanning segment. N-linked (GlcNAc...) asparagine glycosylation is present at asparagine 103. 5 helical membrane-spanning segments follow: residues 111–131 (AMTV…LAPL), 147–167 (VYMA…FLVF), 169–189 (IIAG…VADL), 200–220 (ALFA…GGFV), and 228–248 (WTFR…FALM). N-linked (GlcNAc...) asparagine glycosylation occurs at asparagine 252. 5 consecutive transmembrane segments (helical) span residues 302-322 (PIVL…FLLF), 353-373 (LLLM…YGWT), 380-400 (WIVP…VVIP), 403-423 (IYLV…ANLL), and 446-466 (GWGN…PWIF).

This sequence belongs to the major facilitator superfamily.

Its subcellular location is the cell membrane. Functionally, efflux pump required for efficient secretion of trichosetin or other secondary metabolies produced by the trichosetin gene cluster. Plays a crucial role in detoxification of the toxic trichosetin in Gibberella fujikuroi cells. The protein is Trichosetin biosynthesis cluster MFS transporter of Gibberella fujikuroi (strain CBS 195.34 / IMI 58289 / NRRL A-6831) (Bakanae and foot rot disease fungus).